The primary structure comprises 184 residues: Large ribosomal subunit protein uL22B (184 aa).

Residue lysine 46 forms a Glycyl lysine isopeptide (Lys-Gly) (interchain with G-Cter in ubiquitin) linkage. Threonine 70 carries the post-translational modification Phosphothreonine.

It belongs to the universal ribosomal protein uL22 family. Component of the large ribosomal subunit (LSU). Mature yeast ribosomes consist of a small (40S) and a large (60S) subunit. The 40S small subunit contains 1 molecule of ribosomal RNA (18S rRNA) and 33 different proteins (encoded by 57 genes). The large 60S subunit contains 3 rRNA molecules (25S, 5.8S and 5S rRNA) and 46 different proteins (encoded by 81 genes). uL22 is associated with the polypeptide exit tunnel.

It is found in the cytoplasm. Component of the ribosome, a large ribonucleoprotein complex responsible for the synthesis of proteins in the cell. The small ribosomal subunit (SSU) binds messenger RNAs (mRNAs) and translates the encoded message by selecting cognate aminoacyl-transfer RNA (tRNA) molecules. The large subunit (LSU) contains the ribosomal catalytic site termed the peptidyl transferase center (PTC), which catalyzes the formation of peptide bonds, thereby polymerizing the amino acids delivered by tRNAs into a polypeptide chain. The nascent polypeptides leave the ribosome through a tunnel in the LSU and interact with protein factors that function in enzymatic processing, targeting, and the membrane insertion of nascent chains at the exit of the ribosomal tunnel. This Saccharomyces cerevisiae (strain ATCC 204508 / S288c) (Baker's yeast) protein is Large ribosomal subunit protein uL22B.